The primary structure comprises 161 residues: Early E3 17.7 kDa glycoprotein (161 aa).

N-linked (GlcNAc...) asparagine; by host glycosylation is found at asparagine 14 and asparagine 87. The helical transmembrane segment at isoleucine 102–asparagine 129 threads the bilayer.

It localises to the host membrane. The protein is Early E3 17.7 kDa glycoprotein of Murine adenovirus A serotype 1 (MAdV-1).